An 843-amino-acid chain; its full sequence is Axin-2 (843 aa).

The interval 1–75 (MSSAMLVTCL…EGRASPDSPL (75 aa)) is disordered. Residues 21–30 (APRPPVPGEE) carry the Tankyrase-binding motif motif. The segment covering 56–69 (RRNEDGLGEPEGRA) has biased composition (basic and acidic residues). An RGS domain is found at 81–200 (SLHSLLGDQD…LTSDIYLEYV (120 aa)). The tract at residues 327-413 (VGSKKQLQRE…REGSELTLNS (87 aa)) is interaction with GSK3B. The tract at residues 334-393 (QREMHRSVKANGQVSLPHFPRTHRLPKEMTPVEPATFAAELISRLEKLKLELESRHSLEE) is interaction with SIAH1 and SIAH2. Disordered stretches follow at residues 396–435 (QQIR…EEDP), 447–494 (LKTP…AASP), 561–674 (APET…RTTP), and 718–748 (ASQQ…EDHK). The interaction with beta-catenin stretch occupies residues 413 to 476 (SREGAPTQHP…PDHHHHHHSQ (64 aa)). Low complexity-rich tracts occupy residues 477–494 (YHSL…AASP) and 588–597 (PGLALPAREG). Polar residues predominate over residues 727 to 741 (SATVQTGATPFSNPS). The DIX domain occupies 761 to 843 (ASELVVTYFF…RILGKVERID (83 aa)).

In terms of assembly, interacts with glycogen synthase kinase-3 beta (GSK3B) and beta-catenin. The interaction between axin and beta-catenin occurs via the armadillo repeats contained in beta-catenin. Interacts with SMAD7 and RNF111. Interacts with ANKRD6. Interacts with SIAH1. Interacts with SIAH2. Post-translationally, probably phosphorylated by GSK3B and dephosphorylated by PP2A. In terms of processing, ADP-ribosylated by tankyrase TNKS and TNKS2. Poly-ADP-ribosylated protein is recognized by RNF146, followed by ubiquitination and subsequent activation of the Wnt signaling pathway. Ubiquitinated by RNF146 when poly-ADP-ribosylated, leading to its degradation and subsequent activation of the Wnt signaling pathway. Deubiquitinated by USP34, deubiquitinated downstream of beta-catenin stabilization step: deubiquitination is important Wnt signaling to positively regulate beta-catenin (CTNBB1)-mediated transcription. As to expression, expressed in brain and lymphoblast.

The protein localises to the cytoplasm. In terms of biological role, inhibitor of the Wnt signaling pathway. Down-regulates beta-catenin. Probably facilitate the phosphorylation of beta-catenin and APC by GSK3B. This is Axin-2 (AXIN2) from Homo sapiens (Human).